Reading from the N-terminus, the 434-residue chain is Serine/threonine transporter SstT (434 aa).

9 helical membrane-spanning segments follow: residues 14–34 (IVIGIIVGAVLGVMVPSWSFI), 41–61 (FVGALKAIAPLLVFLLIMSAI), 72–92 (FGTVIVLYLSATLFSSIAAVA), 135–155 (ALVEGNYLAILFWSLLIGSGL), 172–192 (TVSAVAQNVIQFAPFGIVGLL), 210–230 (LLMLLVATMVFVYLVVYPFMV), 282–302 (ISIPLGGSANSGGAAITVSIM), 316–336 (IFLALLLCFLSAISATGVSGI), and 351–371 (FGISNDIAMQVVGIGFIIGVV). The tract at residues 413–434 (GKGTAEVVTPEKTNEAEESEQV) is disordered.

This sequence belongs to the dicarboxylate/amino acid:cation symporter (DAACS) (TC 2.A.23) family.

It is found in the cell membrane. The enzyme catalyses L-serine(in) + Na(+)(in) = L-serine(out) + Na(+)(out). The catalysed reaction is L-threonine(in) + Na(+)(in) = L-threonine(out) + Na(+)(out). In terms of biological role, involved in the import of serine and threonine into the cell, with the concomitant import of sodium (symport system). The sequence is that of Serine/threonine transporter SstT from Lacticaseibacillus casei (strain BL23) (Lactobacillus casei).